A 227-amino-acid polypeptide reads, in one-letter code: Cytochrome c oxidase subunit 2 (227 aa).

The Mitochondrial intermembrane segment spans residues 1–14; it reads MAYPVQLGFQDAAS. A helical membrane pass occupies residues 15–45; that stretch reads PIMEELLYFHDHTLMIMFLISSLVLYIISLM. At 46-59 the chain is on the mitochondrial matrix side; the sequence is LTTELMHTNTMDAQ. A helical transmembrane segment spans residues 60–87; sequence EVETVWTILPAAILILIALPSLRILYMM. The Mitochondrial intermembrane portion of the chain corresponds to 88-227; sequence DEITTPSLTL…HFEEWLLSML (140 aa). Positions 161, 196, 198, 200, 204, and 207 each coordinate Cu cation. Glutamate 198 is a binding site for Mg(2+).

This sequence belongs to the cytochrome c oxidase subunit 2 family. As to quaternary structure, component of the cytochrome c oxidase (complex IV, CIV), a multisubunit enzyme composed of 14 subunits. The complex is composed of a catalytic core of 3 subunits MT-CO1, MT-CO2 and MT-CO3, encoded in the mitochondrial DNA, and 11 supernumerary subunits COX4I, COX5A, COX5B, COX6A, COX6B, COX6C, COX7A, COX7B, COX7C, COX8 and NDUFA4, which are encoded in the nuclear genome. The complex exists as a monomer or a dimer and forms supercomplexes (SCs) in the inner mitochondrial membrane with NADH-ubiquinone oxidoreductase (complex I, CI) and ubiquinol-cytochrome c oxidoreductase (cytochrome b-c1 complex, complex III, CIII), resulting in different assemblies (supercomplex SCI(1)III(2)IV(1) and megacomplex MCI(2)III(2)IV(2)). Found in a complex with TMEM177, COA6, COX18, COX20, SCO1 and SCO2. Interacts with TMEM177 in a COX20-dependent manner. Interacts with COX20. Interacts with COX16. It depends on Cu cation as a cofactor.

Its subcellular location is the mitochondrion inner membrane. The enzyme catalyses 4 Fe(II)-[cytochrome c] + O2 + 8 H(+)(in) = 4 Fe(III)-[cytochrome c] + 2 H2O + 4 H(+)(out). In terms of biological role, component of the cytochrome c oxidase, the last enzyme in the mitochondrial electron transport chain which drives oxidative phosphorylation. The respiratory chain contains 3 multisubunit complexes succinate dehydrogenase (complex II, CII), ubiquinol-cytochrome c oxidoreductase (cytochrome b-c1 complex, complex III, CIII) and cytochrome c oxidase (complex IV, CIV), that cooperate to transfer electrons derived from NADH and succinate to molecular oxygen, creating an electrochemical gradient over the inner membrane that drives transmembrane transport and the ATP synthase. Cytochrome c oxidase is the component of the respiratory chain that catalyzes the reduction of oxygen to water. Electrons originating from reduced cytochrome c in the intermembrane space (IMS) are transferred via the dinuclear copper A center (CU(A)) of subunit 2 and heme A of subunit 1 to the active site in subunit 1, a binuclear center (BNC) formed by heme A3 and copper B (CU(B)). The BNC reduces molecular oxygen to 2 water molecules using 4 electrons from cytochrome c in the IMS and 4 protons from the mitochondrial matrix. The polypeptide is Cytochrome c oxidase subunit 2 (MT-CO2) (Lemur catta (Ring-tailed lemur)).